A 37-amino-acid chain; its full sequence is MKIRASVRKICEKCRLIRRRGRIIVICYNPKHKQRQG.

This sequence belongs to the bacterial ribosomal protein bL36 family.

It localises to the plastid. Its subcellular location is the chloroplast. The protein is Large ribosomal subunit protein bL36c of Acorus calamus (Sweet flag).